Reading from the N-terminus, the 89-residue chain is Small ribosomal subunit protein uS15 (89 aa).

It belongs to the universal ribosomal protein uS15 family. In terms of assembly, part of the 30S ribosomal subunit. Forms a bridge to the 50S subunit in the 70S ribosome, contacting the 23S rRNA.

One of the primary rRNA binding proteins, it binds directly to 16S rRNA where it helps nucleate assembly of the platform of the 30S subunit by binding and bridging several RNA helices of the 16S rRNA. In terms of biological role, forms an intersubunit bridge (bridge B4) with the 23S rRNA of the 50S subunit in the ribosome. The protein is Small ribosomal subunit protein uS15 of Methylorubrum extorquens (strain CM4 / NCIMB 13688) (Methylobacterium extorquens).